The following is a 637-amino-acid chain: 1,4-alpha-glucan branching enzyme GlgB (637 aa).

Catalysis depends on D307, which acts as the Nucleophile. The Proton donor role is filled by E361.

The protein belongs to the glycosyl hydrolase 13 family. GlgB subfamily. Monomer.

It carries out the reaction Transfers a segment of a (1-&gt;4)-alpha-D-glucan chain to a primary hydroxy group in a similar glucan chain.. Its pathway is glycan biosynthesis; glycogen biosynthesis. Functionally, catalyzes the formation of the alpha-1,6-glucosidic linkages in glycogen by scission of a 1,4-alpha-linked oligosaccharide from growing alpha-1,4-glucan chains and the subsequent attachment of the oligosaccharide to the alpha-1,6 position. This is 1,4-alpha-glucan branching enzyme GlgB from Oceanobacillus iheyensis (strain DSM 14371 / CIP 107618 / JCM 11309 / KCTC 3954 / HTE831).